The primary structure comprises 245 residues: 4-hydroxy-tetrahydrodipicolinate reductase (245 aa).

Residues 7–12, 75–77, and 102–105 each bind NAD(+); these read GAKGKV, GTT, and APNF. The active-site Proton donor/acceptor is histidine 132. A (S)-2,3,4,5-tetrahydrodipicolinate-binding site is contributed by histidine 133. Lysine 136 (proton donor) is an active-site residue. Residue 142 to 143 coordinates (S)-2,3,4,5-tetrahydrodipicolinate; it reads GT.

This sequence belongs to the DapB family.

Its subcellular location is the cytoplasm. It catalyses the reaction (S)-2,3,4,5-tetrahydrodipicolinate + NAD(+) + H2O = (2S,4S)-4-hydroxy-2,3,4,5-tetrahydrodipicolinate + NADH + H(+). The catalysed reaction is (S)-2,3,4,5-tetrahydrodipicolinate + NADP(+) + H2O = (2S,4S)-4-hydroxy-2,3,4,5-tetrahydrodipicolinate + NADPH + H(+). It participates in amino-acid biosynthesis; L-lysine biosynthesis via DAP pathway; (S)-tetrahydrodipicolinate from L-aspartate: step 4/4. In terms of biological role, catalyzes the conversion of 4-hydroxy-tetrahydrodipicolinate (HTPA) to tetrahydrodipicolinate. The chain is 4-hydroxy-tetrahydrodipicolinate reductase from Mycobacterium tuberculosis (strain ATCC 25177 / H37Ra).